We begin with the raw amino-acid sequence, 146 residues long: Large ribosomal subunit protein uL13 (146 aa).

It belongs to the universal ribosomal protein uL13 family. In terms of assembly, part of the 50S ribosomal subunit.

In terms of biological role, this protein is one of the early assembly proteins of the 50S ribosomal subunit, although it is not seen to bind rRNA by itself. It is important during the early stages of 50S assembly. The chain is Large ribosomal subunit protein uL13 from Methylobacillus flagellatus (strain ATCC 51484 / DSM 6875 / VKM B-1610 / KT).